A 96-amino-acid polypeptide reads, in one-letter code: U-scoloptoxin(06)-Sm1a (96 aa).

A signal peptide spans 1-23 (MNSFSFFLVIFVVLNLQVAKLMA).

Belongs to the scoloptoxin-06 family. Post-translationally, contains 2 disulfide bonds. As to expression, expressed by the venom gland.

The protein resides in the secreted. The chain is U-scoloptoxin(06)-Sm1a from Scolopendra morsitans (Tanzanian blue ringleg centipede).